The sequence spans 740 residues: NAD(P)H-quinone oxidoreductase subunit 5, chloroplastic (740 aa).

Helical transmembrane passes span 9–29, 40–60, 89–109, 125–145, 147–167, 185–205, 219–239, 258–278, 286–306, 327–347, 354–374, 396–416, 425–445, 543–563, 602–622, and 717–737; these read WIIP…LFLF, WAFQ…YLSI, IDPL…MVLI, FAYM…SNLI, IYIF…FWFT, GDFG…SFEF, NEVD…GAVA, TPIS…FLVA, VIPY…LLGA, LGYM…FHLI, ALLF…VGYS, ITFL…CFWS, WLYS…TAFY, LFPI…GIPF, VLSV…YKPI, and SYLF…YLLF.

Belongs to the complex I subunit 5 family. In terms of assembly, NDH is composed of at least 16 different subunits, 5 of which are encoded in the nucleus.

The protein localises to the plastid. Its subcellular location is the chloroplast thylakoid membrane. It catalyses the reaction a plastoquinone + NADH + (n+1) H(+)(in) = a plastoquinol + NAD(+) + n H(+)(out). The enzyme catalyses a plastoquinone + NADPH + (n+1) H(+)(in) = a plastoquinol + NADP(+) + n H(+)(out). Its function is as follows. NDH shuttles electrons from NAD(P)H:plastoquinone, via FMN and iron-sulfur (Fe-S) centers, to quinones in the photosynthetic chain and possibly in a chloroplast respiratory chain. The immediate electron acceptor for the enzyme in this species is believed to be plastoquinone. Couples the redox reaction to proton translocation, and thus conserves the redox energy in a proton gradient. This chain is NAD(P)H-quinone oxidoreductase subunit 5, chloroplastic (ndhF), found in Nicotiana tabacum (Common tobacco).